The sequence spans 142 residues: Transcriptional regulator MraZ (142 aa).

2 SpoVT-AbrB domains span residues 5-51 and 77-120; these read ASSL…PRPE and AMDV…DKAT.

It belongs to the MraZ family. Forms oligomers.

The protein resides in the cytoplasm. It is found in the nucleoid. The sequence is that of Transcriptional regulator MraZ from Variovorax paradoxus (strain S110).